Consider the following 684-residue polypeptide: Probable potassium transport system protein Kup (684 aa).

Transmembrane regions (helical) follow at residues 19-39 (ALLV…LYVM), 61-81 (VSLI…LIAL), 104-124 (WLVL…MLTP), 151-171 (QVIW…RFGT), 177-197 (AFGP…FIAL), 223-243 (MGLF…ALYS), 255-275 (LSWP…AVWL), 303-323 (LGAI…LISG), 352-372 (LYIP…IGYF), 381-401 (AYGL…YQYL), 407-427 (PAVI…VFFI), and 433-453 (FLHG…VMYV).

It belongs to the HAK/KUP transporter (TC 2.A.72) family.

Its subcellular location is the cell membrane. The enzyme catalyses K(+)(in) + H(+)(in) = K(+)(out) + H(+)(out). Functionally, transport of potassium into the cell. Likely operates as a K(+):H(+) symporter. The protein is Probable potassium transport system protein Kup of Lacticaseibacillus casei (strain BL23) (Lactobacillus casei).